The sequence spans 202 residues: Small ribosomal subunit protein uS2 (202 aa).

Belongs to the universal ribosomal protein uS2 family. Part of the 30S ribosomal subunit.

In Pyrococcus furiosus (strain ATCC 43587 / DSM 3638 / JCM 8422 / Vc1), this protein is Small ribosomal subunit protein uS2.